We begin with the raw amino-acid sequence, 98 residues long: UPF0213 protein in ldhD 5'region (98 aa).

One can recognise a GIY-YIG domain in the interval 7-84 (NGFYFYVLWC…KKQSRKEKLK (78 aa)).

It belongs to the UPF0213 family.

The chain is UPF0213 protein in ldhD 5'region from Pediococcus acidilactici.